A 306-amino-acid chain; its full sequence is tRNA pseudouridine synthase B (306 aa).

Asp47 (nucleophile) is an active-site residue.

The protein belongs to the pseudouridine synthase TruB family. Type 1 subfamily.

It catalyses the reaction uridine(55) in tRNA = pseudouridine(55) in tRNA. In terms of biological role, responsible for synthesis of pseudouridine from uracil-55 in the psi GC loop of transfer RNAs. The chain is tRNA pseudouridine synthase B from Neisseria gonorrhoeae (strain NCCP11945).